The chain runs to 159 residues: Adult-specific rigid cuticular protein 15.7 (159 aa).

Positions 23 to 89 constitute a Chitin-binding type R&amp;R domain; it reads LGNYAFNYGI…SIKTNEPGTA (67 aa).

Component of the rigid cuticle of the spider. The protein is Adult-specific rigid cuticular protein 15.7 of Araneus diadematus (European garden spider).